Consider the following 380-residue polypeptide: MRTIKEKKEHPRLRKTARTKKVTHRKLSSGPVCLLCFQEPGDPEKLGEFLQKDNLCVHYFCLILSSKLPQKGQPNRGLHGFMPEDIKKEAARASRKVCFVCKRKGAAIRCQKDQCVQNFHLPCGQERGCLSQFFGEYKSYCGKHRPTQNIHQRSFGESCVLCCEDLSRASVENIRSPCCSQAIYHRKCIQKYAHTSAKHFFKCPQCNNREEFPQEMLRMGIHIPDRDAAWELEPGAFSELYQRYQHCDAPICLYEQGRDSFEDEGRWRLILCATCGSHGTHRDCSSLRPNSKKWECNECLPASTEDSVSENLGDTPCCSSTFCPHEPFLRATSLEENPGSSWTNWLQPSLLEKPESSSGSSCQSWRSKGIKVTKDCKKSK.

The interval 1 to 23 (MRTIKEKKEHPRLRKTARTKKVT) is disordered. Basic residues predominate over residues 10 to 23 (HPRLRKTARTKKVT). The C2HC pre-PHD-type zinc finger occupies 30–68 (GPVCLLCFQEPGDPEKLGEFLQKDNLCVHYFCLILSSKL). Cysteine 33, cysteine 36, histidine 58, and cysteine 61 together coordinate Zn(2+). Residues 67–92 (KLPQKGQPNRGLHGFMPEDIKKEAAR) form a required for interaction and ubiquitination of the nucleosome core particle region. The PHD-type zinc-finger motif lies at 96-145 (KVCFVCKRKGAAIRCQKDQCVQNFHLPCGQERGCLSQFFGEYKSYCGKHR). 24 residues coordinate Zn(2+): cysteine 98, cysteine 101, cysteine 110, cysteine 115, histidine 120, cysteine 123, cysteine 141, histidine 144, cysteine 159, cysteine 162, cysteine 178, cysteine 179, histidine 185, cysteine 188, cysteine 203, cysteine 206, cysteine 247, cysteine 252, cysteine 272, cysteine 275, histidine 281, cysteine 284, cysteine 296, and cysteine 299. Residues 150-306 (IHQRSFGESC…NECLPASTED (157 aa)) form a required for interaction with ubiquitinated UBE2D2 region. Residues 159–207 (CVLCCEDLSRASVENIRSPCCSQAIYHRKCIQKYAHTSAKHFFKCPQCN) form an RING-type; degenerate zinc finger. The segment at 243–300 (RYQHCDAPICLYEQGRDSFEDEGRWRLILCATCGSHGTHRDCSSLRPNSKKWECNECL) is required for association with and ubiquitination of H3. Residues 352-367 (EKPESSSGSSCQSWRS) are compositionally biased toward low complexity. The interval 352–380 (EKPESSSGSSCQSWRSKGIKVTKDCKKSK) is disordered.

In terms of assembly, interacts with MEF2C; the interaction promotes MEF2C binding to its transcription targets. Interacts with GATA4; the interaction promotes GATA4 binding to its transcription targets. Interacts with UBE2D2; the interaction inhibits cleavage of PHF7 and promotes association of the complex with the nucleosome core particle.

It localises to the nucleus. It carries out the reaction S-ubiquitinyl-[E2 ubiquitin-conjugating enzyme]-L-cysteine + [acceptor protein]-L-lysine = [E2 ubiquitin-conjugating enzyme]-L-cysteine + N(6)-ubiquitinyl-[acceptor protein]-L-lysine.. It participates in protein modification; protein ubiquitination. Its function is as follows. E3 ubiquitin-protein ligase which ubiquitinates histone H3 at 'Lys-14'. Required for male fertility, via inhibition of SPOP-mediated BRDT degradation when in the presence of acetylated histone H4 in early condensing spermatids. Stabilization of BRDT allows it to facilitate histone removal in early condensing spermatids and promote the progression of histone-to-protamine exchange. Promotes the expression of steroidogenesis proteins in the testes, and as a result plays a role in maintaining testosterone levels and repressing osteoclastogenesis. Promotes transcription of cardiac enhancer genes by facilitating binding of cardiac transcription factors such as MEF2C and GATA4 to target gene promoters. Ubiquitinates histone H4. Ubiquitinates histone H2A and H3 as part of the nucleosome core particle. The chain is E3 ubiquitin-protein ligase PHF7 from Rattus norvegicus (Rat).